The following is a 329-amino-acid chain: L-carnitine dehydrogenase (329 aa).

Residue 19 to 24 (GAGVIG) participates in NAD(+) binding.

The protein belongs to the 3-hydroxyacyl-CoA dehydrogenase family. L-carnitine dehydrogenase subfamily. In terms of assembly, homodimer.

Its subcellular location is the cytoplasm. It carries out the reaction carnitine + NAD(+) = 3-dehydrocarnitine + NADH + H(+). It functions in the pathway amine and polyamine metabolism; carnitine metabolism. In terms of biological role, catalyzes the NAD(+)-dependent oxidation of L-carnitine to 3-dehydrocarnitine. This chain is L-carnitine dehydrogenase, found in Nocardiopsis dassonvillei (strain ATCC 23218 / DSM 43111 / CIP 107115 / JCM 7437 / KCTC 9190 / NBRC 14626 / NCTC 10488 / NRRL B-5397 / IMRU 509) (Actinomadura dassonvillei).